The chain runs to 793 residues: Coiled-coil domain-containing protein 175 (793 aa).

Coiled-coil stretches lie at residues glutamate 131 to leucine 163, lysine 205 to glutamate 377, lysine 431 to lysine 535, leucine 562 to glutamate 679, and leucine 716 to serine 745.

This is Coiled-coil domain-containing protein 175 (CCDC175) from Homo sapiens (Human).